We begin with the raw amino-acid sequence, 461 residues long: MSLDIQSLDIQCEELSDARWAELLPLLQQCQVVRLDDCGLTEARCKDISSALRVNPALAELNLRSNELGDVGVHCVLQGLQTPSCKIQKLSLQNCCLTGAGCGVLSSTLRTLPTLQELHLSDNLLGDAGLQLLCEGLLDPQCRLEKLQLEYCSLSAASCEPLASVLRAKPDFKELTVSNNDINEAGVRVLCQGLKDSPCQLEALKLESCGVTSDNCRDLCGIVASKASLRELALGSNKLGDVGMAELCPGLLHPSSRLRTLWIWECGITAKGCGDLCRVLRAKESLKELSLAGNELGDEGARLLCETLLEPGCQLESLWVKSCSFTAACCSHFSSVLAQNRFLLELQISNNRLEDAGVRELCQGLGQPGSVLRVLWLADCDVSDSSCSSLAATLLANHSLRELDLSNNCLGDAGILQLVESVRQPGCLLEQLVLYDIYWSEEMEDRLQALEKDKPSLRVIS.

Position 2 is an N-acetylserine (Ser-2). The segment at 2 to 11 (SLDIQSLDIQ) is 2 X 5 AA tandem repeats of S-L-D-I-Q. 15 LRR repeats span residues 20–48 (WAEL…CKDI), 49–76 (SSAL…VHCV), 77–105 (LQGL…CGVL), 106–133 (SSTL…LQLL), 134–162 (CEGL…CEPL), 163–190 (ASVL…VRVL), 191–219 (CQGL…CRDL), 220–247 (CGIV…MAEL), 248–276 (CPGL…CGDL), 277–304 (CRVL…ARLL), 305–333 (CETL…CSHF), 334–361 (SSVL…VREL), 362–390 (CQGL…CSSL), 391–418 (AATL…ILQL), and 419–447 (VESV…EDRL). Thr-82 bears the Phosphothreonine mark. At Ser-91 the chain carries Phosphoserine.

As to quaternary structure, forms high-affinity heterodimers with RNASE1, ANG and RNASE2. Post-translationally, the N-terminus is blocked. At least 30 of the 32 cysteine residues are in the reduced form.

The protein resides in the cytoplasm. The protein localises to the nucleus. Its function is as follows. Ribonuclease inhibitor which inhibits RNASE1, RNASE2 and angiogenin (ANG). May play a role in redox homeostasis. Required to inhibit the cytotoxic tRNA ribonuclease activity of ANG in the cytoplasm in absence of stress. Relocates to the nucleus in response to stress, relieving inhibition of ANG in the cytoplasm, and inhibiting the angiogenic activity of ANG in the nucleus. The protein is Ribonuclease inhibitor of Homo sapiens (Human).